The following is a 229-amino-acid chain: Predicted GPI-anchored protein 19 (229 aa).

The N-terminal stretch at 1–20 (MFSTTSIVLWFTILLPVTLP) is a signal peptide. Positions 63 to 92 (DNEQVLRKSKKKKKTTSTGTPGNENTTDFA) are disordered. Residues 81-92 (GTPGNENTTDFA) are compositionally biased toward polar residues. Residues N87, N184, and N189 are each glycosylated (N-linked (GlcNAc...) asparagine). G208 carries the GPI-anchor amidated glycine lipid modification. The propeptide at 209-229 (FGSLIPYNSFYLYILLFCIIF) is removed in mature form.

The protein localises to the cell membrane. Predicted GPI-anchored protein which may have a role during host infection. In Candida albicans (strain SC5314 / ATCC MYA-2876) (Yeast), this protein is Predicted GPI-anchored protein 19 (PGA19).